A 409-amino-acid chain; its full sequence is BRCA1-A complex subunit Abraxas 1 (409 aa).

The MPN domain occupies 7-160 (SAVLSGFVLG…HSLYKPQKGL (154 aa)). A Phosphoserine modification is found at Ser48. Residues 206–260 (DGSLKEVHKINEMYASLQEELKSICKKVEDSEQAVDKLVKDVNRLKREIEKRRGA) adopt a coiled-coil conformation. Basic and acidic residues predominate over residues 362–372 (LLDTQDKRSKA). Residues 362-409 (LLDTQDKRSKADTGSSNQDKASKMSSPETDEEIEKMKGFGEYSRSPTF) form a disordered region. The span at 373 to 388 (DTGSSNQDKASKMSSP) shows a compositional bias: polar residues. Ser386 and Ser387 each carry phosphoserine. Thr390 is subject to Phosphothreonine. Phosphoserine is present on residues Ser404 and Ser406. The pSXXF motif motif lies at 406-409 (SPTF).

It belongs to the FAM175 family. Abraxas subfamily. In terms of assembly, component of the ARISC complex, at least composed of UIMC1/RAP80, ABRAXAS1, BRCC3/BRCC36, BABAM2 and BABAM1/NBA1. Component of the BRCA1-A complex, at least composed of BRCA1, BARD1, UIMC1/RAP80, ABRAXAS1, BRCC3/BRCC36, BABAM2 and BABAM1/NBA1. In the complex, interacts directly with UIMC1/RAP80, BRCC3/BRCC36 and BABAM2. Interacts directly (when phosphorylated at Ser-406) with BRCA1. Homodimer. The homodimer interacts directly (when phosphorylated at Ser-404 and Ser-406) with two BRCA1 chains, giving rise to a heterotetramer. Binds polyubiquitin. Post-translationally, phosphorylation of Ser-406 of the pSXXF motif by ATM or ATR constitutes a specific recognition motif for the BRCT domain of BRCA1. Ionizing radiation promotes rapid phosphorylation at Ser-404 and Ser-406 by ATM; this promotes recruitment of BRCA1 to sites of DNA damage.

Its subcellular location is the nucleus. Involved in DNA damage response and double-strand break (DSB) repair. Component of the BRCA1-A complex, acting as a central scaffold protein that assembles the various components of the complex and mediates the recruitment of BRCA1. The BRCA1-A complex specifically recognizes 'Lys-63'-linked ubiquitinated histones H2A and H2AX at DNA lesion sites, leading to target the BRCA1-BARD1 heterodimer to sites of DNA damage at DSBs. This complex also possesses deubiquitinase activity that specifically removes 'Lys-63'-linked ubiquitin on histones H2A and H2AX. The chain is BRCA1-A complex subunit Abraxas 1 from Homo sapiens (Human).